The primary structure comprises 174 residues: Crossover junction endodeoxyribonuclease RuvC (174 aa).

Active-site residues include Asp-8, Glu-67, and Asp-139. Positions 8, 67, and 139 each coordinate Mg(2+).

The protein belongs to the RuvC family. In terms of assembly, homodimer which binds Holliday junction (HJ) DNA. The HJ becomes 2-fold symmetrical on binding to RuvC with unstacked arms; it has a different conformation from HJ DNA in complex with RuvA. In the full resolvosome a probable DNA-RuvA(4)-RuvB(12)-RuvC(2) complex forms which resolves the HJ. Mg(2+) serves as cofactor.

The protein localises to the cytoplasm. It carries out the reaction Endonucleolytic cleavage at a junction such as a reciprocal single-stranded crossover between two homologous DNA duplexes (Holliday junction).. Functionally, the RuvA-RuvB-RuvC complex processes Holliday junction (HJ) DNA during genetic recombination and DNA repair. Endonuclease that resolves HJ intermediates. Cleaves cruciform DNA by making single-stranded nicks across the HJ at symmetrical positions within the homologous arms, yielding a 5'-phosphate and a 3'-hydroxyl group; requires a central core of homology in the junction. The consensus cleavage sequence is 5'-(A/T)TT(C/G)-3'. Cleavage occurs on the 3'-side of the TT dinucleotide at the point of strand exchange. HJ branch migration catalyzed by RuvA-RuvB allows RuvC to scan DNA until it finds its consensus sequence, where it cleaves and resolves the cruciform DNA. In Pseudomonas aeruginosa (strain LESB58), this protein is Crossover junction endodeoxyribonuclease RuvC.